Reading from the N-terminus, the 113-residue chain is MPATPAKRAKRVQQEKRHHKKRTETFSVYIYRVLKQVHPETGVSKKSMSIMNSFINDIFEKIALEASKLVRYNKKHTLSSREVQTAVRLLLPGELAKHAVSEGTKAVTKYTSS.

The disordered stretch occupies residues 1 to 21 (MPATPAKRAKRVQQEKRHHKK). A compositionally biased stretch (basic residues) spans 7 to 21 (KRAKRVQQEKRHHKK). Lys109 is covalently cross-linked (Glycyl lysine isopeptide (Lys-Gly) (interchain with G-Cter in ubiquitin)).

Belongs to the histone H2B family. The nucleosome is a histone octamer containing two molecules each of H2A, H2B, H3 and H4 assembled in one H3-H4 heterotetramer and two H2A-H2B heterodimers. The octamer wraps approximately 147 bp of DNA. In terms of processing, monoubiquitination of Lys-109 gives a specific tag for epigenetic transcriptional activation and is also prerequisite for histone H3 'Lys-4' and 'Lys-79' methylation.

It is found in the nucleus. The protein localises to the chromosome. Its function is as follows. Core component of nucleosome. Nucleosomes wrap and compact DNA into chromatin, limiting DNA accessibility to the cellular machineries which require DNA as a template. Histones thereby play a central role in transcription regulation, DNA repair, DNA replication and chromosomal stability. DNA accessibility is regulated via a complex set of post-translational modifications of histones, also called histone code, and nucleosome remodeling. This is Histone H2B (H2B1) from Euplotes crassus.